The following is a 394-amino-acid chain: Seipin (394 aa).

Over 1 to 27 (MVNDPPVPALLWAQEMGHVMAGRARKL) the chain is Cytoplasmic. Residues 28-48 (LLQFGVFFCTILLLLWVSVFL) form a helical membrane-spanning segment. Residues 49 to 242 (YGSFYYSYMP…TCAFVGVASN (194 aa)) are Lumenal-facing. Residues asparagine 88 and asparagine 242 are each glycosylated (N-linked (GlcNAc...) asparagine). The helical transmembrane segment at 243–263 (FTFLSVIVLFSYMQWVWGGIW) threads the bilayer. Residues 264–394 (PRQRLSLQVN…VRQRPICSSS (131 aa)) are Cytoplasmic-facing. Residues 281–394 (RKDIQRKVSA…VRQRPICSSS (114 aa)) form a disordered region. At serine 289 the chain carries Phosphoserine. Over residues 292–303 (QPGPQGQEESPQ) the composition is skewed to low complexity. 2 positions are modified to phosphoserine: serine 346 and serine 351.

Belongs to the seipin family. As to quaternary structure, undecamer (an oligomer having eleven subunits). Oligomerization is important for its function in lipid droplet formation. Interacts with LDAF1 to form an oligomeric complex. Interacts with RAB18. Interacts with ZFYVE1 in a RAB18-dependent manner.

The protein localises to the endoplasmic reticulum membrane. Its subcellular location is the lipid droplet. Functionally, plays a crucial role in the formation of lipid droplets (LDs) which are storage organelles at the center of lipid and energy homeostasis. In association with LDAF1, defines the sites of LD formation in the ER. Also required for growth and maturation of small nascent LDs into larger mature LDs. Mediates the formation and/or stabilization of endoplasmic reticulum-lipid droplets (ER-LD) contacts, facilitating protein and lipid delivery from the ER into growing LDs. Regulates the maturation of ZFYVE1-positive nascent LDs and the function of the RAB18-ZFYVE1 complex in mediating the formation of ER-LD contacts. Binds anionic phospholipids including phosphatidic acid. Plays an important role in the differentiation and development of adipocytes. The protein is Seipin of Bos taurus (Bovine).